Reading from the N-terminus, the 670-residue chain is tRNA 5-methylaminomethyl-2-thiouridine biosynthesis bifunctional protein MnmC (670 aa).

The interval 1–245 (MKPIAIQPAS…KREMLTGALS (245 aa)) is tRNA (mnm(5)s(2)U34)-methyltransferase. Residues 271–670 (VGGGIASALL…RKLLKGRAAS (400 aa)) form an FAD-dependent cmnm(5)s(2)U34 oxidoreductase region.

The protein in the N-terminal section; belongs to the methyltransferase superfamily. tRNA (mnm(5)s(2)U34)-methyltransferase family. It in the C-terminal section; belongs to the DAO family. FAD serves as cofactor.

Its subcellular location is the cytoplasm. The enzyme catalyses 5-aminomethyl-2-thiouridine(34) in tRNA + S-adenosyl-L-methionine = 5-methylaminomethyl-2-thiouridine(34) in tRNA + S-adenosyl-L-homocysteine + H(+). Its function is as follows. Catalyzes the last two steps in the biosynthesis of 5-methylaminomethyl-2-thiouridine (mnm(5)s(2)U) at the wobble position (U34) in tRNA. Catalyzes the FAD-dependent demodification of cmnm(5)s(2)U34 to nm(5)s(2)U34, followed by the transfer of a methyl group from S-adenosyl-L-methionine to nm(5)s(2)U34, to form mnm(5)s(2)U34. In Cronobacter sakazakii (strain ATCC BAA-894) (Enterobacter sakazakii), this protein is tRNA 5-methylaminomethyl-2-thiouridine biosynthesis bifunctional protein MnmC.